A 207-amino-acid polypeptide reads, in one-letter code: Ribosomal RNA small subunit methyltransferase G (207 aa).

Residues glycine 73, leucine 78, 124–125 (VE), and arginine 139 contribute to the S-adenosyl-L-methionine site.

This sequence belongs to the methyltransferase superfamily. RNA methyltransferase RsmG family.

Its subcellular location is the cytoplasm. It catalyses the reaction guanosine(527) in 16S rRNA + S-adenosyl-L-methionine = N(7)-methylguanosine(527) in 16S rRNA + S-adenosyl-L-homocysteine. In terms of biological role, specifically methylates the N7 position of guanine in position 527 of 16S rRNA. The protein is Ribosomal RNA small subunit methyltransferase G of Escherichia coli O1:K1 / APEC.